We begin with the raw amino-acid sequence, 105 residues long: Tyrosine-protein phosphatase 12 (105 aa).

Positions 1-105 (WRMIWEKRVE…NLRRIVRTEF (105 aa)) constitute a Tyrosine-protein phosphatase domain. Asp-84 is a substrate binding site.

Belongs to the protein-tyrosine phosphatase family.

The enzyme catalyses O-phospho-L-tyrosyl-[protein] + H2O = L-tyrosyl-[protein] + phosphate. This chain is Tyrosine-protein phosphatase 12 (STY-12), found in Styela plicata (Wrinkled sea squirt).